The sequence spans 109 residues: Small ribosomal subunit protein bS6 (109 aa).

This sequence belongs to the bacterial ribosomal protein bS6 family.

In terms of biological role, binds together with bS18 to 16S ribosomal RNA. The sequence is that of Small ribosomal subunit protein bS6 from Dehalococcoides mccartyi (strain CBDB1).